The chain runs to 429 residues: Saccharopine dehydrogenase-like oxidoreductase (429 aa).

A2 carries the post-translational modification N-acetylalanine. S217 carries the post-translational modification Phosphoserine.

It belongs to the saccharopine dehydrogenase family.

This is Saccharopine dehydrogenase-like oxidoreductase (SCCPDH) from Bos taurus (Bovine).